The chain runs to 329 residues: Ribose-phosphate pyrophosphokinase B (329 aa).

Residues aspartate 131, histidine 133, and glutamate 146 each contribute to the Mg(2+) site. The tract at residues 227–242 is binding of phosphoribosylpyrophosphate; sequence TGKIAIIIDDIADTCK.

It belongs to the ribose-phosphate pyrophosphokinase family. It depends on Mg(2+) as a cofactor.

It localises to the cytoplasm. It carries out the reaction D-ribose 5-phosphate + ATP = 5-phospho-alpha-D-ribose 1-diphosphate + AMP + H(+). The protein operates within metabolic intermediate biosynthesis; 5-phospho-alpha-D-ribose 1-diphosphate biosynthesis; 5-phospho-alpha-D-ribose 1-diphosphate from D-ribose 5-phosphate (route I): step 1/1. This Dictyostelium discoideum (Social amoeba) protein is Ribose-phosphate pyrophosphokinase B (prsB).